Reading from the N-terminus, the 291-residue chain is N-acetylmannosamine kinase (291 aa).

ATP-binding positions include 5–12 (AIDIGGTK) and 132–139 (GVGGGVVC). The Zn(2+) site is built by His156, Cys166, Cys168, and Cys173.

Belongs to the ROK (NagC/XylR) family. NanK subfamily. As to quaternary structure, homodimer.

The catalysed reaction is an N-acyl-D-mannosamine + ATP = an N-acyl-D-mannosamine 6-phosphate + ADP + H(+). The protein operates within amino-sugar metabolism; N-acetylneuraminate degradation; D-fructose 6-phosphate from N-acetylneuraminate: step 2/5. Its function is as follows. Catalyzes the phosphorylation of N-acetylmannosamine (ManNAc) to ManNAc-6-P. The protein is N-acetylmannosamine kinase of Salmonella heidelberg (strain SL476).